Reading from the N-terminus, the 451-residue chain is 3-phosphoshikimate 1-carboxyvinyltransferase (451 aa).

K30, S31, and R35 together coordinate 3-phosphoshikimate. K30 contributes to the phosphoenolpyruvate binding site. 2 residues coordinate phosphoenolpyruvate: G101 and R130. The 3-phosphoshikimate site is built by S176, S177, Q178, D321, and K348. Position 178 (Q178) interacts with phosphoenolpyruvate. Catalysis depends on D321, which acts as the Proton acceptor. Residues R352 and Q422 each coordinate phosphoenolpyruvate.

It belongs to the EPSP synthase family. In terms of assembly, monomer.

The protein localises to the cytoplasm. The enzyme catalyses 3-phosphoshikimate + phosphoenolpyruvate = 5-O-(1-carboxyvinyl)-3-phosphoshikimate + phosphate. Its pathway is metabolic intermediate biosynthesis; chorismate biosynthesis; chorismate from D-erythrose 4-phosphate and phosphoenolpyruvate: step 6/7. Its function is as follows. Catalyzes the transfer of the enolpyruvyl moiety of phosphoenolpyruvate (PEP) to the 5-hydroxyl of shikimate-3-phosphate (S3P) to produce enolpyruvyl shikimate-3-phosphate and inorganic phosphate. This is 3-phosphoshikimate 1-carboxyvinyltransferase from Burkholderia pseudomallei (strain K96243).